The primary structure comprises 395 residues: 1-deoxy-D-xylulose 5-phosphate reductoisomerase (395 aa).

Residues Thr-10, Gly-11, Ser-12, Ile-13, Asn-38, and Asn-123 each contribute to the NADPH site. 1-deoxy-D-xylulose 5-phosphate is bound at residue Lys-124. Glu-125 lines the NADPH pocket. Position 149 (Asp-149) interacts with Mn(2+). The 1-deoxy-D-xylulose 5-phosphate site is built by Ser-150, Glu-151, Ser-185, and His-208. Glu-151 serves as a coordination point for Mn(2+). Gly-214 serves as a coordination point for NADPH. 4 residues coordinate 1-deoxy-D-xylulose 5-phosphate: Ser-221, Asn-226, Lys-227, and Glu-230. Glu-230 is a Mn(2+) binding site.

The protein belongs to the DXR family. Requires Mg(2+) as cofactor. Mn(2+) is required as a cofactor.

It catalyses the reaction 2-C-methyl-D-erythritol 4-phosphate + NADP(+) = 1-deoxy-D-xylulose 5-phosphate + NADPH + H(+). It participates in isoprenoid biosynthesis; isopentenyl diphosphate biosynthesis via DXP pathway; isopentenyl diphosphate from 1-deoxy-D-xylulose 5-phosphate: step 1/6. Its function is as follows. Catalyzes the NADPH-dependent rearrangement and reduction of 1-deoxy-D-xylulose-5-phosphate (DXP) to 2-C-methyl-D-erythritol 4-phosphate (MEP). This chain is 1-deoxy-D-xylulose 5-phosphate reductoisomerase, found in Shewanella woodyi (strain ATCC 51908 / MS32).